A 111-amino-acid polypeptide reads, in one-letter code: Toxin 3FTx-Tri3 (111 aa).

An N-terminal signal peptide occupies residues Met-1 to Ala-19. The propeptide occupies Asp-20–Arg-34. Pyrrolidone carboxylic acid is present on Gln-35. Cystine bridges form between Cys-44–Cys-68, Cys-47–Cys-87, Cys-91–Cys-102, and Cys-103–Cys-108.

It belongs to the three-finger toxin family. Ancestral subfamily. Boigatoxin sub-subfamily. As to expression, expressed by the venom gland.

It localises to the secreted. In terms of biological role, potent postsynaptic neurotoxin. Displays readily reversible competitive antagonism at the nicotinic acetylcholine receptor (nAChR). The protein is Toxin 3FTx-Tri3 of Trimorphodon biscutatus (Western lyre snake).